The primary structure comprises 342 residues: L-threonine 3-dehydrogenase (342 aa).

Residue Cys38 participates in Zn(2+) binding. Residues Thr40 and His43 each act as charge relay system in the active site. Zn(2+) contacts are provided by His63, Glu64, Cys93, Cys96, Cys99, and Cys107. NAD(+) contacts are provided by residues Val175, Asp195, Arg200, 262-264 (LGI), and 286-287 (IY).

The protein belongs to the zinc-containing alcohol dehydrogenase family. As to quaternary structure, homotetramer. The cofactor is Zn(2+).

It localises to the cytoplasm. The enzyme catalyses L-threonine + NAD(+) = (2S)-2-amino-3-oxobutanoate + NADH + H(+). Its pathway is amino-acid degradation; L-threonine degradation via oxydo-reductase pathway; glycine from L-threonine: step 1/2. Functionally, catalyzes the NAD(+)-dependent oxidation of L-threonine to 2-amino-3-ketobutyrate. This Coxiella burnetii (strain Dugway 5J108-111) protein is L-threonine 3-dehydrogenase.